We begin with the raw amino-acid sequence, 218 residues long: MEIGISIEAENKVGVLHKLTGILSELGGNITYTQQFIKDDGKIGFIYMEVEGIKDIEELKRRMESCECVKSFEIHSSLKKIYGKRVIIIGGGAQVAEVARGAISEADRHNIRGERISVDTLPIVGEENLYEAVKAVATLPRVGILVLAGSLMGGKITEAVKELKEKTGIPVISLKMFGSVPKVADLVVGDPLQAGVLAVMAIAETAKFDINKVKGRVL.

The ACT domain occupies 4 to 83 (GISIEAENKV…IHSSLKKIYG (80 aa)).

This is an uncharacterized protein from Methanocaldococcus jannaschii (strain ATCC 43067 / DSM 2661 / JAL-1 / JCM 10045 / NBRC 100440) (Methanococcus jannaschii).